Here is an 83-residue protein sequence, read N- to C-terminus: Three-finger toxin MALT0052C (83 aa).

The first 21 residues, methionine 1 to threonine 21, serve as a signal peptide directing secretion. Cystine bridges form between cysteine 24–cysteine 45, cysteine 38–cysteine 62, cysteine 64–cysteine 75, and cysteine 76–cysteine 81.

This sequence belongs to the three-finger toxin family. Short-chain subfamily. Type I alpha-neurotoxin sub-subfamily. As to expression, expressed by the venom gland.

The protein resides in the secreted. Binds to muscle nicotinic acetylcholine receptor (nAChR) and inhibit acetylcholine from binding to the receptor, thereby impairing neuromuscular transmission. The sequence is that of Three-finger toxin MALT0052C from Micrurus altirostris (Uruguayan coral snake).